A 248-amino-acid polypeptide reads, in one-letter code: Anamorsin homolog (248 aa).

The segment at 4–129 (FKGLQKSLYI…ETGSSARLSF (126 aa)) is N-terminal SAM-like domain. A linker region spans residues 130–161 (AKKNASAINVWKISGDDEELIDEEELLDEEDK). Residues Cys-172, Cys-181, Cys-184, and Cys-186 each contribute to the [2Fe-2S] cluster site. The interval 172-186 (CSTTGKRKACKNCSC) is fe-S binding site A. 4 residues coordinate [4Fe-4S] cluster: Cys-209, Cys-212, Cys-220, and Cys-223. Short sequence motifs (cx2C motif) lie at residues 209 to 212 (CGNC) and 220 to 223 (CSTC). The tract at residues 209 to 223 (CGNCYLGDAFRCSTC) is fe-S binding site B.

This sequence belongs to the anamorsin family. In terms of assembly, monomer. [2Fe-2S] cluster is required as a cofactor. [4Fe-4S] cluster serves as cofactor.

The protein resides in the cytoplasm. It is found in the mitochondrion intermembrane space. Component of the cytosolic iron-sulfur (Fe-S) protein assembly (CIA) machinery. Required for the maturation of extramitochondrial Fe-S proteins. Part of an electron transfer chain functioning in an early step of cytosolic Fe-S biogenesis, facilitating the de novo assembly of a [4Fe-4S] cluster on the cytosolic Fe-S scaffold complex. Electrons are transferred from NADPH via a FAD- and FMN-containing diflavin oxidoreductase. Together with the diflavin oxidoreductase, also required for the assembly of the diferric tyrosyl radical cofactor of ribonucleotide reductase (RNR), probably by providing electrons for reduction during radical cofactor maturation in the catalytic small subunit. The chain is Anamorsin homolog from Drosophila erecta (Fruit fly).